The primary structure comprises 311 residues: Olfactory receptor 1N1 (311 aa).

Residues 1–23 (MENQSSISEFFLRGISAPPEQQQ) lie on the Extracellular side of the membrane. A glycan (N-linked (GlcNAc...) asparagine) is linked at N3. The chain crosses the membrane as a helical span at residues 24 to 47 (SLFGIFLCMYLVTLTGNLLIILAI). The Cytoplasmic segment spans residues 48-55 (GSDLHLHT). A helical transmembrane segment spans residues 56–77 (PMYFFLANLSFVDMGLTSSTVT). Residues 78-98 (KMLVNIQTRHHTISYTGCLTQ) are Extracellular-facing. C95 and C187 are joined by a disulfide. The chain crosses the membrane as a helical span at residues 99-118 (MYFFLMFGDLDSFFLAAMAY). Residues 119-137 (DRYVAICHPLCYSTVMRPQ) are Cytoplasmic-facing. A helical membrane pass occupies residues 138–156 (VCALMLALCWVLTNIVALT). At 157-194 (HTFLMARLSFCVTGEIAHFFCDITPVLKLSCSDTHINE) the chain is on the extracellular side. A helical transmembrane segment spans residues 195–217 (MMVFVLGGTVLIVPFLCIVTSYI). The Cytoplasmic segment spans residues 218-234 (HIVPAILRVRTRGGVGK). A helical transmembrane segment spans residues 235–257 (AFSTCSSHLCVVCVFYGTLFSAY). Topologically, residues 258–270 (LCPPSIASEEKDI) are extracellular. Residues 271–290 (AAAAMYTIVTPMLNPFIYSL) traverse the membrane as a helical segment. The Cytoplasmic segment spans residues 291-311 (RNKDMKGALKRLFSHRSIVSS).

The protein belongs to the G-protein coupled receptor 1 family.

It is found in the cell membrane. Its function is as follows. Odorant receptor. This chain is Olfactory receptor 1N1 (OR1N1), found in Homo sapiens (Human).